The primary structure comprises 211 residues: Probable GTP-binding protein EngB (211 aa).

Residues 21–205 enclose the EngB-type G domain; sequence LMATIVFVGR…KNRIYEIIRE (185 aa). GTP-binding positions include 29-36, 54-58, 71-74, 151-154, and 184-186; these read GRSNVGKS, GVTRK, DMPG, NKLD, and ISA. Ser36 and Thr56 together coordinate Mg(2+).

The protein belongs to the TRAFAC class TrmE-Era-EngA-EngB-Septin-like GTPase superfamily. EngB GTPase family. Requires Mg(2+) as cofactor.

Its function is as follows. Necessary for normal cell division and for the maintenance of normal septation. The chain is Probable GTP-binding protein EngB from Pyrococcus abyssi (strain GE5 / Orsay).